A 268-amino-acid chain; its full sequence is Tryptophan synthase alpha chain (268 aa).

Active-site proton acceptor residues include Glu49 and Asp60.

The protein belongs to the TrpA family. Tetramer of two alpha and two beta chains.

The catalysed reaction is (1S,2R)-1-C-(indol-3-yl)glycerol 3-phosphate + L-serine = D-glyceraldehyde 3-phosphate + L-tryptophan + H2O. The protein operates within amino-acid biosynthesis; L-tryptophan biosynthesis; L-tryptophan from chorismate: step 5/5. In terms of biological role, the alpha subunit is responsible for the aldol cleavage of indoleglycerol phosphate to indole and glyceraldehyde 3-phosphate. This Yersinia pseudotuberculosis serotype O:1b (strain IP 31758) protein is Tryptophan synthase alpha chain.